The following is a 112-amino-acid chain: Protein FAM32A (112 aa).

The segment at 23-56 is disordered; the sequence is TKRKKKKKDKDKAKMLEAMGTSKKNEEEKRRCLD. A compositionally biased stretch (basic and acidic residues) spans 45 to 56; sequence KKNEEEKRRCLD.

The protein belongs to the FAM32 family.

Its subcellular location is the nucleus. In terms of biological role, may induce G2 arrest and apoptosis. May also increase cell sensitivity to apoptotic stimuli. The chain is Protein FAM32A (Fam32a) from Rattus norvegicus (Rat).